We begin with the raw amino-acid sequence, 107 residues long: Small ribosomal subunit protein uS10 (107 aa).

The protein belongs to the universal ribosomal protein uS10 family. As to quaternary structure, part of the 30S ribosomal subunit.

Involved in the binding of tRNA to the ribosomes. This is Small ribosomal subunit protein uS10 from Deinococcus geothermalis (strain DSM 11300 / CIP 105573 / AG-3a).